We begin with the raw amino-acid sequence, 543 residues long: Transmembrane protease serine 13 (543 aa).

2 disordered regions span residues 1 to 96 (MDRG…TRVY) and 109 to 129 (RASP…PGLS). Topologically, residues 1–143 (MDRGSHRNSS…SWQETQRQLP (143 aa)) are cytoplasmic. 2 tandem repeats follow at residues 14-17 (TPPQ) and 18-22 (ASPAR). The 4 X 4 AA repeats of T-P-P-Q stretch occupies residues 14–49 (TPPQASPARTSPARAPPQASPARTPPQASPARTPPQ). The segment at 18-69 (ASPARTSPARAPPQASPARTPPQASPARTPPQASPARAPPPQASPARASPAR) is 8 X 5 AA repeats of A-S-P-A-R. One copy of the 2-2; approximate repeat lies at 23–27 (TSPAR). Residues 27 to 60 (RAPPQASPARTPPQASPARTPPQASPARAPPPQA) are compositionally biased toward pro residues. A 1-2; approximate repeat occupies 28-31 (APPQ). Repeat copies occupy residues 32-36 (ASPAR), 37-40 (TPPQ), 41-45 (ASPAR), 46-49 (TPPQ), and 50-54 (ASPAR). One copy of the 2-6; approximate repeat lies at 55 to 59 (APPPQ). Tandem repeats lie at residues 60–64 (ASPAR) and 65–69 (ASPAR). Low complexity-rich tracts occupy residues 61–94 (SPAR…SPTR) and 109–120 (RASPARSAPATR). Residues 144–164 (LIGCVILLISLVISLILLFYF) form a helical; Signal-anchor for type II membrane protein membrane-spanning segment. Over 165–543 (WRGHTGIKYK…MESEVRFRKS (379 aa)) the chain is Extracellular. The 23-residue stretch at 180-202 (CPIHAVRCDGVVDCKMKSDELGC) folds into the LDL-receptor class A domain. The region spanning 199–301 (ELGCVRFDWD…HCGLRAMTGR (103 aa)) is the SRCR domain. 3 cysteine pairs are disulfide-bonded: C226–C290, C239–C293, and C327–C343. N-linked (GlcNAc...) asparagine glycosylation is found at N231 and N268. The 234-residue stretch at 302-535 (IVGGALTSES…VLPWIYRKME (234 aa)) folds into the Peptidase S1 domain. H342 (charge relay system) is an active-site residue. N-linked (GlcNAc...) asparagine glycosylation occurs at N381. Catalysis depends on D390, which acts as the Charge relay system. The N-linked (GlcNAc...) asparagine glycan is linked to N421. 3 cysteine pairs are disulfide-bonded: C424/C493, C456/C472, and C483/C511. S487 (charge relay system) is an active-site residue.

The protein belongs to the peptidase S1 family. As to quaternary structure, interacts with SPINT1/HAI-1; the interaction promotes the phosphorylation and cell membrane localization of TMPRSS13. Interacts with SPINT2/HAI-2; the interaction promotes the phosphorylation and cell membrane localization of TMPRSS13. Post-translationally, the inactive zymogen is post-translationally modified and then trafficked to the cell surface, whereby it undergoes autocatalytic cleavage resulting in an activated form that is released extracellularly. In terms of processing, phosphorylation is required for localization at the cell surface. Phosphorylation increases following inhibition of protease activity by SPINT2/HAI-2. Expressed in the suprabasal squamous epithelium of the epidermis, hair follicles, oral epithelium, cornea, upper digestive tract, transitional epithelium of the bladder, prostate, heart, intestine, kidney and thymus.

The protein resides in the cell membrane. Its subcellular location is the secreted. It localises to the cytoplasm. Cleavage of HGF is inhibited by SPINT1/HAI-1 via the BPTI/Kunitz inhibitor 1 domain. In terms of biological role, serine protease. Cleaves the proform of PRSS8/prostasin to form the active protein. Cleaves the proform of HGF to form the active protein which promotes MAPK signaling. Promotes the formation of the stratum corneum and subsequently the epidermal barrier in embryos. The sequence is that of Transmembrane protease serine 13 (Tmprss13) from Mus musculus (Mouse).